We begin with the raw amino-acid sequence, 440 residues long: Transcription factor SOX-4 (440 aa).

Residues 1-10 (MVQQTNNAEN) are compositionally biased toward polar residues. Residues 1–58 (MVQQTNNAENTEALLAGESSDSGAGLELGIASSPTPGSTASTGGKADDPSWCKTPSGH) form a disordered region. Residues 31–44 (ASSPTPGSTASTGG) are compositionally biased toward low complexity. Positions 59-127 (IKRPMNAFMV…KHMADYPDYK (69 aa)) form a DNA-binding region, HMG box. Lys95 is modified (N6-acetyllysine). Disordered regions lie at residues 128-211 (YRPR…AAAS), 234-258 (PSAA…HPAD), and 272-382 (ASAS…NFES). 5 stretches are compositionally biased toward low complexity: residues 136–148 (SGNA…ATAK), 157–166 (AGSSGHAGSS), 234–253 (PSAA…ATPA), 304–322 (GRSL…ASRS), and 330–362 (ASLR…GSSS). Acidic residues predominate over residues 363-372 (SDDEFEDDLL). Over residues 373-382 (DLNPSSNFES) the composition is skewed to low complexity. The 9aaTAD motif lies at 392–400 (SALDRDLDF).

Interacts with UBE2I. Interacts with HDAC1; interaction inhibits the transcriptional activator activity. Acetylation at Lys-95 by KAT5 promotes the transcription activator activity and is required during myoblast differentiation. Acetylation by KAT5 abolishes the interaction between SOX4 and HDAC1 and switches SOX4 into a transcriptional activator. Expressed in both gamma-delta T-cells and Cd4+ Cd8+ double-positive (DP) alpha-beta T-cells. Expressed in the ovaries and the thymus.

It is found in the nucleus. In terms of biological role, transcriptional activator that binds with high affinity to the T-cell enhancer motif 5'-AACAAAG-3' motif. Required for IL17A-producing Vgamma2-positive gamma-delta T-cell maturation and development, via binding to regulator loci of RORC to modulate expression. Involved in skeletal myoblast differentiation by promoting gene expression of CALD1. This Mus musculus (Mouse) protein is Transcription factor SOX-4.